The primary structure comprises 384 residues: UPF0496 protein At3g28310/At3g28320 (384 aa).

Positions 184 to 215 (QESLFDRVTETKERIAKEIEEVQKRISNVNTA) form a coiled coil. The next 2 membrane-spanning stretches (helical) occupy residues 217-237 (IVSH…CIAL) and 242-262 (VGAP…VQWV). The stretch at 264 to 361 (VNYVLNNSLE…TTKITEVCET (98 aa)) forms a coiled coil.

This sequence belongs to the UPF0496 family.

It localises to the membrane. In Arabidopsis thaliana (Mouse-ear cress), this protein is UPF0496 protein At3g28310/At3g28320.